Consider the following 427-residue polypeptide: Peptidase B (427 aa).

Positions 195 and 200 each coordinate Mn(2+). Lysine 207 is a catalytic residue. 3 residues coordinate Mn(2+): aspartate 218, aspartate 277, and glutamate 279. Arginine 281 is a catalytic residue.

It belongs to the peptidase M17 family. In terms of assembly, homohexamer. The cofactor is Mn(2+).

It is found in the cytoplasm. The enzyme catalyses Release of an N-terminal amino acid, Xaa, from a peptide or arylamide. Xaa is preferably Glu or Asp but may be other amino acids, including Leu, Met, His, Cys and Gln.. Probably plays an important role in intracellular peptide degradation. The polypeptide is Peptidase B (Salmonella choleraesuis (strain SC-B67)).